A 311-amino-acid chain; its full sequence is Ribosomal RNA small subunit methyltransferase H 1 (311 aa).

Residues 33–35, D53, F80, D101, and Q108 contribute to the S-adenosyl-L-methionine site; that span reads AGH.

This sequence belongs to the methyltransferase superfamily. RsmH family.

It is found in the cytoplasm. The catalysed reaction is cytidine(1402) in 16S rRNA + S-adenosyl-L-methionine = N(4)-methylcytidine(1402) in 16S rRNA + S-adenosyl-L-homocysteine + H(+). Its function is as follows. Specifically methylates the N4 position of cytidine in position 1402 (C1402) of 16S rRNA. The chain is Ribosomal RNA small subunit methyltransferase H 1 from Alkaliphilus metalliredigens (strain QYMF).